The following is an 804-amino-acid chain: Leucine--tRNA ligase (804 aa).

Residues 40-51 carry the 'HIGH' region motif; it reads PYPSGAGLHVGH. A 'KMSKS' region motif is present at residues 576–580; that stretch reads KMSKS. Lysine 579 serves as a coordination point for ATP.

This sequence belongs to the class-I aminoacyl-tRNA synthetase family.

It is found in the cytoplasm. It catalyses the reaction tRNA(Leu) + L-leucine + ATP = L-leucyl-tRNA(Leu) + AMP + diphosphate. This Staphylococcus aureus (strain bovine RF122 / ET3-1) protein is Leucine--tRNA ligase.